The sequence spans 104 residues: UPF0145 protein HCH_01985 (104 aa).

This sequence belongs to the UPF0145 family.

The protein is UPF0145 protein HCH_01985 of Hahella chejuensis (strain KCTC 2396).